Reading from the N-terminus, the 135-residue chain is uncharacterized protein (135 aa).

This is an uncharacterized protein from Sinorhizobium fredii (strain NBRC 101917 / NGR234).